Consider the following 141-residue polypeptide: Hemoglobin subunit alpha-D (141 aa).

Residues 1-141 form the Globin domain; that stretch reads MLTEDDKQLI…VSAVLAEKYR (141 aa). Heme b-binding residues include His58 and His87.

Belongs to the globin family. As to quaternary structure, heterotetramer of two alpha-D chains and two beta chains. In terms of tissue distribution, red blood cells.

Functionally, involved in oxygen transport from the lung to the various peripheral tissues. The polypeptide is Hemoglobin subunit alpha-D (HBAD) (Chelonoidis niger (Galapagos giant tortoise)).